Here is a 160-residue protein sequence, read N- to C-terminus: Phosphopantetheine adenylyltransferase (160 aa).

Serine 8 contacts substrate. ATP is bound by residues 8–9 and histidine 16; that span reads SF. Positions 40, 72, and 86 each coordinate substrate. Residues 87–89, glutamate 97, and 122–128 each bind ATP; these read GLR and YSFLSSS.

It belongs to the bacterial CoaD family. In terms of assembly, homohexamer. Mg(2+) serves as cofactor.

Its subcellular location is the cytoplasm. The enzyme catalyses (R)-4'-phosphopantetheine + ATP + H(+) = 3'-dephospho-CoA + diphosphate. It participates in cofactor biosynthesis; coenzyme A biosynthesis; CoA from (R)-pantothenate: step 4/5. Its function is as follows. Reversibly transfers an adenylyl group from ATP to 4'-phosphopantetheine, yielding dephospho-CoA (dPCoA) and pyrophosphate. This Synechococcus sp. (strain CC9311) protein is Phosphopantetheine adenylyltransferase.